The primary structure comprises 88 residues: Co-chaperonin GroES (88 aa).

This sequence belongs to the GroES chaperonin family. Heptamer of 7 subunits arranged in a ring. Interacts with the chaperonin GroEL.

It localises to the cytoplasm. In terms of biological role, together with the chaperonin GroEL, plays an essential role in assisting protein folding. The GroEL-GroES system forms a nano-cage that allows encapsulation of the non-native substrate proteins and provides a physical environment optimized to promote and accelerate protein folding. GroES binds to the apical surface of the GroEL ring, thereby capping the opening of the GroEL channel. The polypeptide is Co-chaperonin GroES (Treponema denticola (strain ATCC 35405 / DSM 14222 / CIP 103919 / JCM 8153 / KCTC 15104)).